Consider the following 729-residue polypeptide: Anti-bacteriophage protein B (729 aa).

A Helicase ATP-binding domain is found at 109–271; the sequence is FDLLKSGQNV…KLGYPHTFVS (163 aa). 122–129 lines the ATP pocket; sequence APTSMGKS. The Helicase C-terminal domain maps to 297-472; that stretch reads ALGEIAHACV…GIDTPINLLA (176 aa).

Belongs to the helicase family. As to quaternary structure, interacts with AbpB.

Its function is as follows. Part of an antiviral system composed of AbpA and AbpB; when both are expressed from a plasmid they confer resistance to phages T2, T4, T7 and lambda but not RB32 or RB69. Resistance is temperature dependent, it can be seen at 30 degrees Celsius but not at 37 or 42 degrees Celsius. The system impairs phage but not bacterial DNA synthesis (shown for T4, T7 and lambda). Partially suppressed by mutations in T4 gene 41, a replicative helicase. Functionally, deletion or mutations in this gene were selected in directed evolution experiments for resistance to intense ionizing radiation (3000 Gy). The chain is Anti-bacteriophage protein B from Escherichia coli (strain K12).